A 309-amino-acid polypeptide reads, in one-letter code: MQLQFLGTGAGQPSKARNVSSLVLKLLEEINEVWMFDCGEGTQHQILETTIKPRKISKIFITHLHGDHIFGLPGFLSSRSFQANEEQTNLEIYGPKGIKNFVLSSLRVSGSRLPYRIDFHEFDENSLGKILETDKFTVYADKLDHTIFCVGYRVMQKDLEGTLDADKLREVGVPFGPLFGKVKNGQDIVLEDGTKIIAADYISAPRPGKIIAILGDTRKTSASVRLAVAADVLVHEATYGKGDEKLARNHGHSTNMQAAEVAKEAGAKRLLLNHISARFLAKDISQMRRDASAVFEKVHVVKDLEEVEI.

His63, His65, Asp67, His68, His145, Asp216, and His274 together coordinate Zn(2+). Asp67 serves as the catalytic Proton acceptor.

Belongs to the RNase Z family. As to quaternary structure, homodimer. The cofactor is Zn(2+).

The enzyme catalyses Endonucleolytic cleavage of RNA, removing extra 3' nucleotides from tRNA precursor, generating 3' termini of tRNAs. A 3'-hydroxy group is left at the tRNA terminus and a 5'-phosphoryl group is left at the trailer molecule.. Zinc phosphodiesterase, which displays some tRNA 3'-processing endonuclease activity. Probably involved in tRNA maturation, by removing a 3'-trailer from precursor tRNA. This is Ribonuclease Z from Streptococcus sanguinis (strain SK36).